The chain runs to 2546 residues: MEENTNNIDNGHMGDNNNENNNNSNNNNNNNSNSSSSFVKGRIDSLNKSTNGLIKIGRSVENSNNSITSGGSSSNSGEISSNNNNNNNNNGILKNSTSGSKDNTPLSESSINLRSIKTSGENKLNSSSSSNSNNNNIGVINKGVSTNLKSIMNALSSKSSENLSNFNNNNSLSSSPLKENQLVKSFDKNITPSKNNSPRAHLNNNNNNNNNNNNNNNNNNNNNNNNNNNNNNNNNNNTTPTLNSPRNKNSIYNTNSNNNSNTTNSTPNSAITPNIIVENKIKEKIQLWGMLKSNCKKYKDMELNQIETSFGRGSADYNFDDEKVVSSNHFKIILHKTVLPYGISNGSLNNSPKPLSTIIPSSNTITTATTNNNNDNAESLTTYSESSEISTDSTGVCSSSSSTSSTLSSKSSSSSSFNKFMEFLLIYIEDNDSTNGTWVNGNKLNRGERVQLDDKSKITLSTPDFSSLSFTFESNISSLSDEEKGKLLKAIVILKDSLDDSTNSFGSSTTTTISGGGSGSSSVNSSGGGSGTTPINVTPNSSNVSVTKKVINRTPSFKMSNLSTKPEGFVSILKNEPTLKNIQLLLSTIKTSDDQWKENFIQTDCILMIVDLLSSNYKKLRYNEIDQAIDIECLSILSTIFTCSKSNQNALKQLSKSNELNFNDIFMLFLLNQQNSNHSVKTKSQFLQFLNSITSNEICHKMIISSIEKIHSIKKDKLKFKWLVESMVFESDFQYKLQSLTLINSLLSNCKNQTTLTKIKSDLQSLGIGKINDLLVLDSSIKEMSIQLTKFNNNFNSSSSSSSISSNSINNSQNNNNNNNNNNNTNNNNNNNSNNNNINNNNNNLNTRKNNFNCKTLNLKDPISLVLLLQNELKSNFSTSVPTSPTSKNPLITSNNNNTSIGNNSNNIITSILTDLYKIANNNNNNNNNTNNKPKMDSNSALTLLSDFSKIISSSISNEQEYQKSIPVLEEKIKILIPSFNNTCNNTTNNNSSAKNIEVDSSVNKSPNTEEDSTKKTINNSPAEDAQIVSASVPPPPPPPPGGNNNNESDVPSSSGGPPPPPPPPPPPGKSSGGGPPPPPPPPPKGGKGGPPPPPPIGGIGSKVVKVKEEQPSVPMKQLFWSKVPVAKTKKTIWENKSDKFELDKIQIEQLFCQKKPANGKGSPKDGIEKEKEEKLELLDPRRSYAVSILISKYKLTPIWVIDCLTSMDDKKLSKDMVRVLLHIVATNEEEEQFKKYEGDKSQLSDVDQFIIETLKVPKIRQRLECIEYKIQFESTLQELVLNAKCVQQVSTSIMSSTSFHGLLHFILRIGNYMNAGSSRGNAEGFKLGFLLTVGNTKSLDNKTSLLNYIIQFISEKYPQFLITKSTIPHLEQASRILWSEMLSQFEQLKSGMSMVQKELELQIKQIGSDNFTHKFKKFTSSKAEHLDSLQIFIKQVEETYQSTIAYFCEENIQPEEFFQIIFNFINLVLKVHKENEDIRIAALPKSKKYQEQQNKPTQNNDHSTKSKLSNLPSSSSINDESSSSASLSSLSTNVNANTENDNLELSKLGFLSKLRKKRSKSEQEPVVEPIQITPKVGSAASAEPSPSIKSRDKKESFKSPIFRSPKFKVSSISPKLKATLNSISKTLRKQQVESPSPNMSPFTSTAISEKASIYDKNINNIQPSSSSSSSSSSSSSSSTITGKKSHNTESEIKKEFISNSSMDKDKEKIKEKEKGTISKGKALLFGHSRSKSTTTSPSSSSSKKQIPSLSECLQESNKTHSRSSSYSPNSKVNSQLMSNPFIMMEQKQPKDSLPIAKDSKEIHNMGTTTTTTPIKVEKIVSVNEKPTIVTMQTKPIPLVPTTTTSTTTTTQTTPPPVTINEKEKETQSKEVITKDFRDIKLKQTGIIEEDRKIQQERQRQFKTFNGKLNSTNKFRTSSSAVFSRNKSLQNINSTKNPSSVGFGDLDLFQKENITINSIKQKLLLKQTQIRSTRTDSSRIKKGKNVSQIVKQVENESPLPNPNKTLSAIRRHNSNLSRKSSKSSNNSSTSSLESLVQTNVINGLNNLKSVSSSSSSSSSMVVNKNGIDDNQQKQQKQQQQQQQQQQQQQQLPQPQQQQQQQQQQQQQQQQQQQQQQQQPQQQSTTTTTISTHHPQLKQVQPQSPSSLSQQPTQQILKPAQPSSPLQSHYKPQQKPQTTYIPKPKPYIANPFPSSTTSTNSSPSNASDLTEVIKSTQSPFEREQTFTKPTLQPVKYPSSASSNSSSVSGSSQSTPLSAASLQPVGNRNLRKQHVTPPSSSISNSTATTKSKKEGNIRFVDQASPSSSSLEQSSNASNAGYTSPPRENSFSNLFKKHKKSHSKSKSTDNTLNGEIESVDENEKSRKKPKTVTKIIDFSKKLFSHKKSKSVDQSSKSNNTNNNNNNNNNNNNNNNNNNSNIDYNNSLNDVGSSSSFSSSSSSPTSNPFPIIQPPNQSPPTKNISSGNISNNTSYSSLGSMNGNNLVASPSSSITSCKPSPGAVSSTSSTLKTPDFFDHKKVQTPEQLGIKSTDIPKVIIIPPNFYQQPV.

Disordered regions lie at residues 1–40 (MEEN…SFVK), 61–108 (ENSN…PLSE), 188–270 (KNIT…PNSA), 369–414 (TTNN…SSSS), 502–541 (TNSF…TPNS), 802–849 (SSIS…NTRK), 879–898 (TSVP…NNNN), 987–1101 (TTNN…GGIG), 1485–1529 (PKSK…ASLS), 1558–1601 (KRSK…FKSP), 1659–1775 (INNI…KVNS), 1840–1869 (VPTT…ETQS), and 2014–2033 (SNLS…SSLE). Composition is skewed to low complexity over residues 16–37 (NNNE…SSSS) and 62–98 (NSNN…NSTS). 2 stretches are compositionally biased toward polar residues: residues 99–108 (GSKDNTPLSE) and 188–198 (KNITPSKNNSP). Composition is skewed to low complexity over residues 203–237 (NNNN…NNNN) and 247–270 (NKNS…PNSA). The segment covering 377–389 (AESLTTYSESSEI) has biased composition (polar residues). Composition is skewed to low complexity over residues 390 to 414 (STDS…SSSS) and 502 to 513 (TNSFGSSTTTTI). Positions 391-444 (TDSTGVCSSSSSTSSTLSSKSSSSSSFNKFMEFLLIYIEDNDSTNGTWVNGNKL) constitute an FHA domain. The GBD/FH3 domain occupies 457–963 (KITLSTPDFS…SSISNEQEYQ (507 aa)). 2 stretches are compositionally biased toward polar residues: residues 879-891 (TSVP…KNPL) and 992-1007 (SSAK…NKSP). Residues 1033 to 1042 (VPPPPPPPPG) show a composition bias toward pro residues. The span at 1043-1056 (GNNNNESDVPSSSG) shows a compositional bias: low complexity. Pro residues predominate over residues 1057-1097 (GPPPPPPPPPPPGKSSGGGPPPPPPPPPKGGKGGPPPPPPI). In terms of domain architecture, FH1 spans 1072–1098 (SGGGPPPPPPPPPKGGKGGPPPPPPIG). Residues 1106–1495 (KVKEEQPSVP…KSKKYQEQQN (390 aa)) form the FH2 domain. The segment covering 1492 to 1502 (EQQNKPTQNND) has biased composition (polar residues). The span at 1507 to 1529 (SKLSNLPSSSSINDESSSSASLS) shows a compositional bias: low complexity. Positions 1563-1593 (EQEPVVEPIQITPKVGSAASAEPSPSIKSRD) constitute a DAD domain. Residues 1665-1679 (SSSSSSSSSSSSSSS) show a composition bias toward low complexity. The segment covering 1687 to 1717 (HNTESEIKKEFISNSSMDKDKEKIKEKEKGT) has biased composition (basic and acidic residues). Positions 1732-1745 (KSTTTSPSSSSSKK) are enriched in low complexity. Residues 1746-1757 (QIPSLSECLQES) are compositionally biased toward polar residues. Low complexity-rich tracts occupy residues 1763-1775 (RSSS…KVNS) and 1841-1853 (PTTT…TTQT). Residues 2067–2118 (IDDNQQKQQKQQQQQQQQQQQQQQLPQPQQQQQQQQQQQQQQQQQQQQQQQQ) are a coiled coil. Residues 2121–2154 (QQSTTTTTISTHHPQLKQVQPQSPSSLSQQPTQQ) are compositionally biased toward low complexity. Disordered stretches follow at residues 2121-2369 (QQST…PKTV), 2381-2473 (SHKK…SYSS), and 2485-2510 (SPSS…LKTP). The span at 2160 to 2179 (QPSSPLQSHYKPQQKPQTTY) shows a compositional bias: polar residues. 2 stretches are compositionally biased toward low complexity: residues 2188–2206 (ANPF…SNAS) and 2237–2256 (SSAS…TPLS). Residues 2274 to 2287 (TPPSSSISNSTATT) show a composition bias toward polar residues. The segment covering 2302–2315 (SPSSSSLEQSSNAS) has biased composition (low complexity). The segment covering 2332–2342 (FKKHKKSHSKS) has biased composition (basic residues). Composition is skewed to low complexity over residues 2388 to 2439 (VDQS…SSSS), 2459 to 2473 (NISS…SYSS), and 2485 to 2497 (SPSS…KPSP). The segment covering 2499–2508 (AVSSTSSTLK) has biased composition (polar residues).

This sequence belongs to the formin homology family. Diaphanous subfamily. Interacts (via GBD/FH3 domain) with activated Rho-GTPases.

Its function is as follows. Formins play an important role in the nucleation of actin and the formation of linear actin filaments. The sequence is that of Formin-J (forJ) from Dictyostelium discoideum (Social amoeba).